We begin with the raw amino-acid sequence, 472 residues long: Glutamyl-tRNA(Gln) amidotransferase subunit A (472 aa).

Residues Lys69 and Ser144 each act as charge relay system in the active site. The Acyl-ester intermediate role is filled by Ser168.

Belongs to the amidase family. GatA subfamily. Heterotrimer of A, B and C subunits.

The enzyme catalyses L-glutamyl-tRNA(Gln) + L-glutamine + ATP + H2O = L-glutaminyl-tRNA(Gln) + L-glutamate + ADP + phosphate + H(+). Its function is as follows. Allows the formation of correctly charged Gln-tRNA(Gln) through the transamidation of misacylated Glu-tRNA(Gln) in organisms which lack glutaminyl-tRNA synthetase. The reaction takes place in the presence of glutamine and ATP through an activated gamma-phospho-Glu-tRNA(Gln). This is Glutamyl-tRNA(Gln) amidotransferase subunit A from Sulfurisphaera tokodaii (strain DSM 16993 / JCM 10545 / NBRC 100140 / 7) (Sulfolobus tokodaii).